A 176-amino-acid polypeptide reads, in one-letter code: V-type proton ATPase 16 kDa proteolipid subunit (176 aa).

The Lumenal segment spans residues 1 to 17 (MSVLLRSVTELCPVYSP). The helical transmembrane segment at 18 to 38 (FFGSMGITASIVFTVFGGAYG) threads the bilayer. Residues 39 to 62 (TAKSSVGISSVGVMKPEFIMRSLF) lie on the Cytoplasmic side of the membrane. The helical transmembrane segment at 63-83 (PVVFAGVIGLYGLIVCIVLFI) threads the bilayer. Residues 84–98 (NVNKSEYSLNRAFLD) lie on the Lumenal side of the membrane. A helical transmembrane segment spans residues 99–119 (LGAGLTCGLCGLASGMSIGIS). The Cytoplasmic portion of the chain corresponds to 120-136 (GDCGVRGAAQQPKLFVS). The chain crosses the membrane as a helical span at residues 137-157 (MLICLIFSEALALYGFIVALI). Over 158 to 176 (MAATGDNSCVATASTSSSS) the chain is Lumenal.

Belongs to the V-ATPase proteolipid subunit family. As to quaternary structure, V-ATPase is a heteromultimeric enzyme composed of a peripheral catalytic V1 complex (main components: subunits A, B, C, D, E, and F) attached to an integral membrane V0 proton pore complex (main component: the proteolipid protein; which is present as a hexamer that forms the proton-conducting pore).

The protein resides in the vacuole membrane. Proton-conducting pore forming subunit of the membrane integral V0 complex of vacuolar ATPase. V-ATPase is responsible for acidifying a variety of intracellular compartments in eukaryotic cells. The sequence is that of V-type proton ATPase 16 kDa proteolipid subunit (VMA3) from Entamoeba dispar.